Reading from the N-terminus, the 601-residue chain is Glutathione-regulated potassium-efflux system protein KefB (601 aa).

The next 13 membrane-spanning stretches (helical) occupy residues 4–24, 29–49, 55–75, 87–107, 111–131, 152–172, 177–197, 207–227, 230–250, 262–282, 284–304, 324–344, and 356–376; these read ADLL…VPLA, IGAV…GLGF, EILH…GLEL, IFGV…GLLM, FLWQ…TAMA, VLLF…LLAG, HFDW…LIGG, FIAA…LVLS, LFMD…GVLL, AIDP…GMSL, LGVL…LVVI, MQFA…FSTA, and ALLL…MKGI. Positions 400-519 constitute an RCK N-terminal domain; the sequence is KPQVIVVGFG…AGVTQFSRET (120 aa).

This sequence belongs to the monovalent cation:proton antiporter 2 (CPA2) transporter (TC 2.A.37) family. KefB subfamily. Interacts with the regulatory subunit KefG.

Its subcellular location is the cell inner membrane. Its function is as follows. Pore-forming subunit of a potassium efflux system that confers protection against electrophiles. Catalyzes K(+)/H(+) antiport. This is Glutathione-regulated potassium-efflux system protein KefB from Salmonella newport (strain SL254).